Reading from the N-terminus, the 387-residue chain is Phosphoglycerate kinase (387 aa).

Residues 21-23, Arg-36, and 59-62 contribute to the substrate site; these read DLN and HLGR. Lys-84 bears the N6-acetyllysine mark. Residues Arg-113 and Arg-146 each coordinate substrate. ATP is bound by residues Lys-197, Glu-314, and 340–343; that span reads GGDT.

Belongs to the phosphoglycerate kinase family. As to quaternary structure, monomer.

It localises to the cytoplasm. It carries out the reaction (2R)-3-phosphoglycerate + ATP = (2R)-3-phospho-glyceroyl phosphate + ADP. It participates in carbohydrate degradation; glycolysis; pyruvate from D-glyceraldehyde 3-phosphate: step 2/5. The protein is Phosphoglycerate kinase of Escherichia coli O9:H4 (strain HS).